A 479-amino-acid polypeptide reads, in one-letter code: MRNFEIVIGIENHVELKTKSKMFSSAPVSYGETPNTNVNETDMAYPGSLPTINKKGIELAIRTCNALNMEIDTLVKFDRKNYFYPDLTKGYQITQQYNPIGKNGKLNINVNGLTKEVDIERLHMEEDTAKQIHKDDLTYIDYNRAGTGLVEIVTRPVLRSADEACAYVEKLREVLLFLKVSDVKMNEGSLRTDVNISIRPFGTQEFSNKVEVKNLNSISNIKKAIEFEVERQTKLMLNNEIIIQETRRFDDTTNSTVSMRSKSDALDYKYFREPNIMPIQLKKEWVEDCIKNSPELADIKRIKYVNDYKISINDANIILTSIEMTEFFEETIKFTNNYTKVANILISDIQAQLNNENTTIDKLALLPSHLAEMINLVDQSVISSKHTKTILPIIMKDSSKSVIEIVEELNIKMISDENEIANLVNPIIESNLELLEQYSERPERVTKTIMGQLMKVTGGNVNPEAGMNIIIKLVENKIK.

The protein belongs to the GatB/GatE family. GatB subfamily. As to quaternary structure, heterotrimer of A, B and C subunits.

The catalysed reaction is L-glutamyl-tRNA(Gln) + L-glutamine + ATP + H2O = L-glutaminyl-tRNA(Gln) + L-glutamate + ADP + phosphate + H(+). The enzyme catalyses L-aspartyl-tRNA(Asn) + L-glutamine + ATP + H2O = L-asparaginyl-tRNA(Asn) + L-glutamate + ADP + phosphate + 2 H(+). Functionally, allows the formation of correctly charged Asn-tRNA(Asn) or Gln-tRNA(Gln) through the transamidation of misacylated Asp-tRNA(Asn) or Glu-tRNA(Gln) in organisms which lack either or both of asparaginyl-tRNA or glutaminyl-tRNA synthetases. The reaction takes place in the presence of glutamine and ATP through an activated phospho-Asp-tRNA(Asn) or phospho-Glu-tRNA(Gln). The polypeptide is Aspartyl/glutamyl-tRNA(Asn/Gln) amidotransferase subunit B (Mesoplasma florum (strain ATCC 33453 / NBRC 100688 / NCTC 11704 / L1) (Acholeplasma florum)).